Reading from the N-terminus, the 553-residue chain is Hydroxylamine reductase (553 aa).

[2Fe-2S] cluster-binding residues include Cys-3, Cys-6, Cys-18, and Cys-25. 8 residues coordinate hybrid [4Fe-2O-2S] cluster: His-252, Glu-276, Cys-320, Cys-408, Cys-436, Cys-461, Glu-495, and Lys-497. Residue Cys-408 is modified to Cysteine persulfide.

This sequence belongs to the HCP family. Requires [2Fe-2S] cluster as cofactor. Hybrid [4Fe-2O-2S] cluster serves as cofactor.

The protein resides in the cytoplasm. The catalysed reaction is A + NH4(+) + H2O = hydroxylamine + AH2 + H(+). Catalyzes the reduction of hydroxylamine to form NH(3) and H(2)O. This chain is Hydroxylamine reductase, found in Aliivibrio fischeri (strain MJ11) (Vibrio fischeri).